A 646-amino-acid polypeptide reads, in one-letter code: Threonine--tRNA ligase (646 aa).

Positions 1 to 61 (MIKITFPDGN…NEDSNFEIVT (61 aa)) constitute a TGS domain. The interval 242–540 (DHRKLGRELD…LIEVYKGAFP (299 aa)) is catalytic. C336, H387, and H517 together coordinate Zn(2+).

The protein belongs to the class-II aminoacyl-tRNA synthetase family. Homodimer. It depends on Zn(2+) as a cofactor.

The protein localises to the cytoplasm. The catalysed reaction is tRNA(Thr) + L-threonine + ATP = L-threonyl-tRNA(Thr) + AMP + diphosphate + H(+). Catalyzes the attachment of threonine to tRNA(Thr) in a two-step reaction: L-threonine is first activated by ATP to form Thr-AMP and then transferred to the acceptor end of tRNA(Thr). Also edits incorrectly charged L-seryl-tRNA(Thr). The chain is Threonine--tRNA ligase from Lactococcus lactis subsp. lactis (strain IL1403) (Streptococcus lactis).